The primary structure comprises 431 residues: Signal recognition particle 54 kDa protein (431 aa).

GTP-binding positions include 105–112 (GVEGSGKT), 185–189 (DTAGR), and 243–246 (TKMD).

The protein belongs to the GTP-binding SRP family. SRP54 subfamily. As to quaternary structure, part of the signal recognition particle protein translocation system, which is composed of SRP and FtsY. Archaeal SRP consists of a 7S RNA molecule of 300 nucleotides and two protein subunits: SRP54 and SRP19.

The protein resides in the cytoplasm. It carries out the reaction GTP + H2O = GDP + phosphate + H(+). Functionally, involved in targeting and insertion of nascent membrane proteins into the cytoplasmic membrane. Binds to the hydrophobic signal sequence of the ribosome-nascent chain (RNC) as it emerges from the ribosomes. The SRP-RNC complex is then targeted to the cytoplasmic membrane where it interacts with the SRP receptor FtsY. In Pyrobaculum calidifontis (strain DSM 21063 / JCM 11548 / VA1), this protein is Signal recognition particle 54 kDa protein.